A 340-amino-acid polypeptide reads, in one-letter code: NAC domain-containing protein 89 (340 aa).

Residues 21–164 enclose the NAC domain; it reads VFPGFKFSPT…AMVVCRVRRN (144 aa). The DNA-binding element occupies 119-170; the sequence is IGTKRTLVFHIGRAPKGERTDWIMHEYCVKGVSLDDAMVVCRVRRNKEYNSG. Positions 167–181 are enriched in polar residues; it reads YNSGTSQKAPKPNSS. Residues 167–198 are disordered; that stretch reads YNSGTSQKAPKPNSSAEKHAKVQNGATSSGSP.

As to quaternary structure, interacts with PAS1.

Its subcellular location is the cytoplasm. The protein localises to the nucleus. Its function is as follows. Transcription factor involved in plant cell division. The sequence is that of NAC domain-containing protein 89 (NAC089) from Arabidopsis thaliana (Mouse-ear cress).